Consider the following 505-residue polypeptide: Oxidative stress-induced growth inhibitor 2 (505 aa).

The protein belongs to the OKL38 family. Requires NADPH as cofactor. Ubiquitous. Expressed at higher levels in testis and ovary.

The protein localises to the midbody. In terms of biological role, monooxygenase catalytic activity. May be involved in meiosis or the maturation of germ cells. The polypeptide is Oxidative stress-induced growth inhibitor 2 (Homo sapiens (Human)).